The chain runs to 430 residues: Tyrosine--tRNA ligase (430 aa).

Tyrosine 36 contacts L-tyrosine. Positions 41-50 (PTASSLHVGS) match the 'HIGH' region motif. Residues tyrosine 170 and glutamine 174 each contribute to the L-tyrosine site. The short motif at 230 to 234 (KMGKT) is the 'KMSKS' region element. Lysine 233 contributes to the ATP binding site. Residues 362–427 (VPAFELFDEI…GKKNYHRLVL (66 aa)) enclose the S4 RNA-binding domain.

The protein belongs to the class-I aminoacyl-tRNA synthetase family. TyrS type 1 subfamily. Homodimer.

It is found in the cytoplasm. The catalysed reaction is tRNA(Tyr) + L-tyrosine + ATP = L-tyrosyl-tRNA(Tyr) + AMP + diphosphate + H(+). Catalyzes the attachment of tyrosine to tRNA(Tyr) in a two-step reaction: tyrosine is first activated by ATP to form Tyr-AMP and then transferred to the acceptor end of tRNA(Tyr). This chain is Tyrosine--tRNA ligase, found in Desulfatibacillum aliphaticivorans.